A 452-amino-acid chain; its full sequence is Isocitrate dehydrogenase [NADP], mitochondrial (452 aa).

A mitochondrion-targeting transit peptide spans 1 to 39; that stretch reads MAGYLRVVRSLCRASGSRPAWAPAALTAPTSQEQPRRHY. N6-acetyllysine occurs at positions 45, 48, 67, and 69. N6-acetyllysine; alternate occurs at positions 80 and 106. N6-succinyllysine; alternate occurs at positions 80 and 106. Residues 115-117 and Arg-122 contribute to the NADP(+) site; that span reads TIT. Residue Thr-117 participates in D-threo-isocitrate binding. D-threo-isocitrate contacts are provided by residues 134–140 and Arg-149; that span reads SPNGTIR. Lys-155 carries the post-translational modification N6-acetyllysine. Lys-166 carries the post-translational modification N6-acetyllysine; alternate. An N6-succinyllysine; alternate modification is found at Lys-166. Arg-172 contributes to the D-threo-isocitrate binding site. N6-acetyllysine; alternate occurs at positions 180 and 193. Residues Lys-180 and Lys-193 each carry the N6-succinyllysine; alternate modification. The residue at position 199 (Lys-199) is an N6-acetyllysine. Lys-256 bears the N6-acetyllysine; alternate mark. N6-succinyllysine; alternate is present on Lys-256. N6-acetyllysine occurs at positions 263, 272, 275, and 280. An N6-acetyllysine; alternate modification is found at Lys-282. Lys-282 is subject to N6-succinyllysine; alternate. Asp-291 serves as a coordination point for Mn(2+). Residue Lys-299 coordinates NADP(+). Asp-314 is a Mn(2+) binding site. Residues 349-354 and Asn-367 each bind NADP(+); that span reads GTVTRH. The residue at position 384 (Lys-384) is an N6-acetyllysine; alternate. Lys-384 is subject to N6-succinyllysine; alternate. N6-acetyllysine occurs at positions 400, 413, and 442.

Belongs to the isocitrate and isopropylmalate dehydrogenases family. In terms of assembly, homodimer. Mg(2+) is required as a cofactor. The cofactor is Mn(2+). Post-translationally, acetylation at Lys-413 dramatically reduces catalytic activity. Deacetylated by SIRT3.

The protein resides in the mitochondrion. The catalysed reaction is D-threo-isocitrate + NADP(+) = 2-oxoglutarate + CO2 + NADPH. Plays a role in intermediary metabolism and energy production. It may tightly associate or interact with the pyruvate dehydrogenase complex. The polypeptide is Isocitrate dehydrogenase [NADP], mitochondrial (IDH2) (Homo sapiens (Human)).